The chain runs to 238 residues: Uracil-DNA glycosylase (238 aa).

Catalysis depends on Asp72, which acts as the Proton acceptor.

The protein belongs to the uracil-DNA glycosylase (UDG) superfamily. UNG family.

The protein localises to the cytoplasm. It carries out the reaction Hydrolyzes single-stranded DNA or mismatched double-stranded DNA and polynucleotides, releasing free uracil.. Its function is as follows. Excises uracil residues from the DNA which can arise as a result of misincorporation of dUMP residues by DNA polymerase or due to deamination of cytosine. This is Uracil-DNA glycosylase from Chromobacterium violaceum (strain ATCC 12472 / DSM 30191 / JCM 1249 / CCUG 213 / NBRC 12614 / NCIMB 9131 / NCTC 9757 / MK).